A 230-amino-acid chain; its full sequence is MWAWALLPICLTIWATAGIWIVYGMSVSNGSVNLSDGFPYISLCGTDPPQSCVFGQVLNVGAMLGVWISAIRFQQIRDYNCHSVLNSVSLAMGILCALGTSIVGNFQQSNQLETHLAGAFLAFVIGNIYFWMQTALTYMVKPTHGGCYIGPIRFCLSVACTALIVLMAVFLKMNMKSISAICEWIVAMILFLLYGLFAVDFWHLDGHYFHVKKRTVIPNEMQVSTVTLSI.

Residue Met1 is a topological domain, cytoplasmic. The helical transmembrane segment at 2 to 22 (WAWALLPICLTIWATAGIWIV) threads the bilayer. Residues 23–50 (YGMSVSNGSVNLSDGFPYISLCGTDPPQ) lie on the Extracellular side of the membrane. Asn29 and Asn33 each carry an N-linked (GlcNAc...) asparagine glycan. Residues 51 to 71 (SCVFGQVLNVGAMLGVWISAI) form a helical membrane-spanning segment. Over 72-83 (RFQQIRDYNCHS) the chain is Cytoplasmic. A helical membrane pass occupies residues 84-104 (VLNSVSLAMGILCALGTSIVG). Topologically, residues 105–115 (NFQQSNQLETH) are extracellular. Residues 116 to 136 (LAGAFLAFVIGNIYFWMQTAL) traverse the membrane as a helical segment. Residues 137-150 (TYMVKPTHGGCYIG) lie on the Cytoplasmic side of the membrane. The chain crosses the membrane as a helical span at residues 151 to 171 (PIRFCLSVACTALIVLMAVFL). Residues 172–183 (KMNMKSISAICE) lie on the Extracellular side of the membrane. Residues 184 to 204 (WIVAMILFLLYGLFAVDFWHL) form a helical membrane-spanning segment. The Cytoplasmic segment spans residues 205–230 (DGHYFHVKKRTVIPNEMQVSTVTLSI).

The protein belongs to the DRAM/TMEM150 family.

It localises to the cell membrane. The protein resides in the endosome membrane. The protein localises to the cytoplasmic vesicle. It is found in the autophagosome membrane. Modulator of macroautophagy that causes accumulation of autophagosomes under basal conditions and enhances autophagic flux. Represses cell death and promotes long-term clonogenic survival of cells grown in the absence of glucose in a macroautophagy-independent manner. May have some role in extracellular matrix engulfment or growth factor receptor recycling, both of which can modulate cell survival. The polypeptide is Modulator of macroautophagy TMEM150B-A (Xenopus laevis (African clawed frog)).